The primary structure comprises 810 residues: Phenylalanine--tRNA ligase beta subunit (810 aa).

In terms of domain architecture, tRNA-binding spans 39–154; sequence APPTEKIVVG…EGTPVGQDIR (116 aa). The 76-residue stretch at 405 to 480 folds into the B5 domain; it reads PQRAPVSMRA…RIYGFEKIPA (76 aa). 4 residues coordinate Mg(2+): aspartate 458, aspartate 464, glutamate 467, and glutamate 468. The region spanning 707–809 is the FDX-ACB domain; sequence SKFPPVRRDI…MARVYGARLR (103 aa).

The protein belongs to the phenylalanyl-tRNA synthetase beta subunit family. Type 1 subfamily. Tetramer of two alpha and two beta subunits. Requires Mg(2+) as cofactor.

The protein resides in the cytoplasm. It catalyses the reaction tRNA(Phe) + L-phenylalanine + ATP = L-phenylalanyl-tRNA(Phe) + AMP + diphosphate + H(+). The chain is Phenylalanine--tRNA ligase beta subunit from Burkholderia mallei (strain ATCC 23344).